We begin with the raw amino-acid sequence, 578 residues long: MDISDISASQLATSPPPITTIDFNSSIEESPAKRVKFAPELTKSFEETLSPTVTLVLRNNEETFDRCLLSFYSNYFRVLFSSKFRDSKSTTHRIRLISAPDLHLLLTIPKAFEQGIKPNISLQKAVELLEPSAFLQMSIPLDYITDVICANLTHENIIKIFRLALLYHTTLAVRVWRAMVRKFQTLFATNVYLTLKENELIGLLTDKHLNLKSADEKTVVVNWIKHNSPLQSDRMAQFAQRNFSRQPQPDATKYEVIRTRQPMDAIVCFGGWASRGVAQNIEVFNTRSDRWQTCNFNYDIPNIRRAYHGIEVVEDKLIVYGGFNGTQQFQTTVLFDLSTKEWRSGANMNDKRCYVTSARINDSHGRPLIFACGGMNGVSRLKTAEMYDYRADQWSEVANMAQMRSDGAVVTIDNKIVVIGGFDGRNIHQGGEVYDPVLDLWHPLSSNMRTRRTGCTAVSIMNQVCMIIGGFNGNRRLDSAEIYDMREGLWHPVPSLHTARSNFSACQMDTCSIYVAGGFDGQATTKESERLDLRSKMWQALPDMSEAKSALRMVTLSDHPFLDELFDIPDDTGIITTW.

Residues P51–P118 form the BTB domain. A BACK domain is found at I158–A236. Kelch repeat units lie at residues A265 to D315, K316 to D362, L368 to N414, I416 to N462, V464 to T510, and S512 to D558.

This Caenorhabditis elegans protein is Kelch repeat-containing protein kel-10.